A 118-amino-acid polypeptide reads, in one-letter code: uncharacterized protein (118 aa).

This is an uncharacterized protein from Haemophilus influenzae (strain ATCC 51907 / DSM 11121 / KW20 / Rd).